The sequence spans 360 residues: Protein Wnt-5b (360 aa).

The N-terminal stretch at 1–16 is a signal peptide; that stretch reads MTPILRLLLLSSLLSC. A disulfide bridge connects residues C84 and C95. N-linked (GlcNAc...) asparagine glycans are attached at residues N94 and N100. 10 disulfides stabilise this stretch: C134/C142, C144/C162, C218/C232, C220/C227, C289/C320, C305/C315, C319/C359, C335/C350, C337/C347, and C342/C343. A lipid anchor (O-palmitoleoyl serine; by PORCN) is attached at S224. N292 and N306 each carry an N-linked (GlcNAc...) asparagine glycan.

This sequence belongs to the Wnt family. In terms of processing, palmitoleoylation is required for efficient binding to frizzled receptors. Depalmitoleoylation leads to Wnt signaling pathway inhibition.

Its subcellular location is the secreted. It localises to the extracellular space. The protein localises to the extracellular matrix. Its function is as follows. Ligand for members of the frizzled family of seven transmembrane receptors. Probable developmental protein. May be a signaling molecule which affects the development of discrete regions of tissues. Is likely to signal over only few cell diameters. This chain is Protein Wnt-5b (wnt5b), found in Xenopus laevis (African clawed frog).